Reading from the N-terminus, the 252-residue chain is Imidazole glycerol phosphate synthase subunit HisF (252 aa).

Catalysis depends on residues aspartate 11 and aspartate 130.

This sequence belongs to the HisA/HisF family. As to quaternary structure, heterodimer of HisH and HisF.

It is found in the cytoplasm. The enzyme catalyses 5-[(5-phospho-1-deoxy-D-ribulos-1-ylimino)methylamino]-1-(5-phospho-beta-D-ribosyl)imidazole-4-carboxamide + L-glutamine = D-erythro-1-(imidazol-4-yl)glycerol 3-phosphate + 5-amino-1-(5-phospho-beta-D-ribosyl)imidazole-4-carboxamide + L-glutamate + H(+). It participates in amino-acid biosynthesis; L-histidine biosynthesis; L-histidine from 5-phospho-alpha-D-ribose 1-diphosphate: step 5/9. Functionally, IGPS catalyzes the conversion of PRFAR and glutamine to IGP, AICAR and glutamate. The HisF subunit catalyzes the cyclization activity that produces IGP and AICAR from PRFAR using the ammonia provided by the HisH subunit. This Dictyoglomus turgidum (strain DSM 6724 / Z-1310) protein is Imidazole glycerol phosphate synthase subunit HisF.